We begin with the raw amino-acid sequence, 315 residues long: Phosphatidylglycerol--prolipoprotein diacylglyceryl transferase (315 aa).

Transmembrane regions (helical) follow at residues 19-39 (FTIH…VWIL) and 93-113 (VWEG…VAFL). Arg141 is a binding site for a 1,2-diacyl-sn-glycero-3-phospho-(1'-sn-glycerol). 2 consecutive transmembrane segments (helical) span residues 188–208 (LFHP…ALII) and 256–276 (MWTA…LYQY).

Belongs to the Lgt family.

It localises to the cell membrane. The enzyme catalyses L-cysteinyl-[prolipoprotein] + a 1,2-diacyl-sn-glycero-3-phospho-(1'-sn-glycerol) = an S-1,2-diacyl-sn-glyceryl-L-cysteinyl-[prolipoprotein] + sn-glycerol 1-phosphate + H(+). The protein operates within protein modification; lipoprotein biosynthesis (diacylglyceryl transfer). Functionally, catalyzes the transfer of the diacylglyceryl group from phosphatidylglycerol to the sulfhydryl group of the N-terminal cysteine of a prolipoprotein, the first step in the formation of mature lipoproteins. The chain is Phosphatidylglycerol--prolipoprotein diacylglyceryl transferase from Bifidobacterium longum subsp. infantis (strain ATCC 15697 / DSM 20088 / JCM 1222 / NCTC 11817 / S12).